The sequence spans 253 residues: Ubiquinone/menaquinone biosynthesis C-methyltransferase UbiE (253 aa).

Residues Thr-76, Asp-97, and Asn-125 to Ala-126 contribute to the S-adenosyl-L-methionine site.

Belongs to the class I-like SAM-binding methyltransferase superfamily. MenG/UbiE family.

The catalysed reaction is a 2-demethylmenaquinol + S-adenosyl-L-methionine = a menaquinol + S-adenosyl-L-homocysteine + H(+). It carries out the reaction a 2-methoxy-6-(all-trans-polyprenyl)benzene-1,4-diol + S-adenosyl-L-methionine = a 5-methoxy-2-methyl-3-(all-trans-polyprenyl)benzene-1,4-diol + S-adenosyl-L-homocysteine + H(+). Its pathway is quinol/quinone metabolism; menaquinone biosynthesis; menaquinol from 1,4-dihydroxy-2-naphthoate: step 2/2. It participates in cofactor biosynthesis; ubiquinone biosynthesis. Functionally, methyltransferase required for the conversion of demethylmenaquinol (DMKH2) to menaquinol (MKH2) and the conversion of 2-polyprenyl-6-methoxy-1,4-benzoquinol (DDMQH2) to 2-polyprenyl-3-methyl-6-methoxy-1,4-benzoquinol (DMQH2). This is Ubiquinone/menaquinone biosynthesis C-methyltransferase UbiE from Rhodopseudomonas palustris (strain BisB5).